The following is a 325-amino-acid chain: Glutarate 2-hydroxylase (325 aa).

The Fe cation site is built by His160, Asp162, and His292.

The protein belongs to the glutarate hydroxylase family. As to quaternary structure, homotetramer. Fe(2+) serves as cofactor.

It catalyses the reaction glutarate + 2-oxoglutarate + O2 = (S)-2-hydroxyglutarate + succinate + CO2. The protein operates within amino-acid degradation. Functionally, acts as an alpha-ketoglutarate-dependent dioxygenase catalyzing hydroxylation of glutarate (GA) to L-2-hydroxyglutarate (L2HG). Functions in a L-lysine degradation pathway that proceeds via cadaverine, glutarate and L-2-hydroxyglutarate. This is Glutarate 2-hydroxylase from Citrobacter koseri (strain ATCC BAA-895 / CDC 4225-83 / SGSC4696).